The primary structure comprises 235 residues: Elongation factor Tu, chloroplastic (235 aa).

The tr-type G domain occupies 1–125; that stretch reads KNMITGAAQM…AVDSYIPTPE (125 aa). GTP is bound at residue 47-50; it reads NKED.

The protein belongs to the TRAFAC class translation factor GTPase superfamily. Classic translation factor GTPase family. EF-Tu/EF-1A subfamily.

The protein resides in the plastid. It localises to the chloroplast. The enzyme catalyses GTP + H2O = GDP + phosphate + H(+). GTP hydrolase that promotes the GTP-dependent binding of aminoacyl-tRNA to the A-site of ribosomes during protein biosynthesis. This chain is Elongation factor Tu, chloroplastic (tufA), found in Mantoniella squamata (Unicellular alga).